We begin with the raw amino-acid sequence, 493 residues long: Cobyric acid synthase (493 aa).

The region spanning 246 to 440 (PIDIAVIKMP…IHGVFDGVVF (195 aa)) is the GATase cobBQ-type domain. The active-site Nucleophile is the cysteine 326. Residue histidine 432 is part of the active site.

Belongs to the CobB/CobQ family. CobQ subfamily.

Its pathway is cofactor biosynthesis; adenosylcobalamin biosynthesis. Functionally, catalyzes amidations at positions B, D, E, and G on adenosylcobyrinic A,C-diamide. NH(2) groups are provided by glutamine, and one molecule of ATP is hydrogenolyzed for each amidation. The sequence is that of Cobyric acid synthase from Clostridium botulinum (strain ATCC 19397 / Type A).